We begin with the raw amino-acid sequence, 592 residues long: A-type ATP synthase subunit A (592 aa).

Residue 234 to 241 participates in ATP binding; that stretch reads GGFGTGKT.

This sequence belongs to the ATPase alpha/beta chains family. Has multiple subunits with at least A(3), B(3), C, D, E, F, H, I and proteolipid K(x).

It is found in the cell membrane. It catalyses the reaction ATP + H2O + 4 H(+)(in) = ADP + phosphate + 5 H(+)(out). Component of the A-type ATP synthase that produces ATP from ADP in the presence of a proton gradient across the membrane. The A chain is the catalytic subunit. The sequence is that of A-type ATP synthase subunit A from Cenarchaeum symbiosum (strain A).